The primary structure comprises 119 residues: Large ribosomal subunit protein uL18 (119 aa).

Belongs to the universal ribosomal protein uL18 family. In terms of assembly, part of the 50S ribosomal subunit; part of the 5S rRNA/L5/L18/L25 subcomplex. Contacts the 5S and 23S rRNAs.

This is one of the proteins that bind and probably mediate the attachment of the 5S RNA into the large ribosomal subunit, where it forms part of the central protuberance. This is Large ribosomal subunit protein uL18 from Lactobacillus delbrueckii subsp. bulgaricus (strain ATCC 11842 / DSM 20081 / BCRC 10696 / JCM 1002 / NBRC 13953 / NCIMB 11778 / NCTC 12712 / WDCM 00102 / Lb 14).